Consider the following 83-residue polypeptide: Small ribosomal subunit protein bS20 (83 aa).

Belongs to the bacterial ribosomal protein bS20 family.

Its function is as follows. Binds directly to 16S ribosomal RNA. The chain is Small ribosomal subunit protein bS20 from Amoebophilus asiaticus (strain 5a2).